We begin with the raw amino-acid sequence, 245 residues long: tRNA pseudouridine synthase A (245 aa).

D52 acts as the Nucleophile in catalysis. Y112 is a substrate binding site.

The protein belongs to the tRNA pseudouridine synthase TruA family. Homodimer.

The enzyme catalyses uridine(38/39/40) in tRNA = pseudouridine(38/39/40) in tRNA. Formation of pseudouridine at positions 38, 39 and 40 in the anticodon stem and loop of transfer RNAs. The protein is tRNA pseudouridine synthase A of Dictyoglomus thermophilum (strain ATCC 35947 / DSM 3960 / H-6-12).